The sequence spans 367 residues: Chorismate synthase (367 aa).

Residues Arg-48 and Arg-54 each contribute to the NADP(+) site. Residues 125 to 127 (RSS), 238 to 239 (NA), Gly-278, 293 to 297 (KPTSS), and Arg-319 contribute to the FMN site.

The protein belongs to the chorismate synthase family. In terms of assembly, homotetramer. Requires FMNH2 as cofactor.

It catalyses the reaction 5-O-(1-carboxyvinyl)-3-phosphoshikimate = chorismate + phosphate. The protein operates within metabolic intermediate biosynthesis; chorismate biosynthesis; chorismate from D-erythrose 4-phosphate and phosphoenolpyruvate: step 7/7. Catalyzes the anti-1,4-elimination of the C-3 phosphate and the C-6 proR hydrogen from 5-enolpyruvylshikimate-3-phosphate (EPSP) to yield chorismate, which is the branch point compound that serves as the starting substrate for the three terminal pathways of aromatic amino acid biosynthesis. This reaction introduces a second double bond into the aromatic ring system. This Stenotrophomonas maltophilia (strain K279a) protein is Chorismate synthase.